A 118-amino-acid chain; its full sequence is uncharacterized protein (118 aa).

This is an uncharacterized protein from Caenorhabditis elegans.